A 711-amino-acid polypeptide reads, in one-letter code: Serine/threonine-protein kinase ATG1b (711 aa).

In terms of domain architecture, Protein kinase spans 20-277 (YAVGRQIGSG…FEEFFHHPFL (258 aa)). Residues 26 to 34 (IGSGSFSVV) and Lys49 each bind ATP. Residue Asp142 is the Proton acceptor of the active site. Disordered stretches follow at residues 318–342 (LPFF…TSPM) and 383–419 (FEGH…SMDQ). The segment covering 383 to 393 (FEGHRLSDRSQ) has biased composition (basic and acidic residues). Residues 394–410 (FKPSSLPDSRSFSTQGR) are compositionally biased toward polar residues. Positions 421–424 (YVLI) match the AIM (Atg8-family-interacting motif) motif.

The protein belongs to the protein kinase superfamily. Ser/Thr protein kinase family.

The protein resides in the cytoplasmic vesicle. It localises to the autophagosome. Functionally, serine/threonine protein kinase involved in autophagy. The ATG1-ATG13 protein kinase complex regulates downstream events required for autophagosome enclosure and/or vacuolar delivery. The chain is Serine/threonine-protein kinase ATG1b from Arabidopsis thaliana (Mouse-ear cress).